Reading from the N-terminus, the 170-residue chain is Adenine phosphoribosyltransferase (170 aa).

This sequence belongs to the purine/pyrimidine phosphoribosyltransferase family. As to quaternary structure, homodimer.

The protein resides in the cytoplasm. It carries out the reaction AMP + diphosphate = 5-phospho-alpha-D-ribose 1-diphosphate + adenine. It participates in purine metabolism; AMP biosynthesis via salvage pathway; AMP from adenine: step 1/1. In terms of biological role, catalyzes a salvage reaction resulting in the formation of AMP, that is energically less costly than de novo synthesis. The protein is Adenine phosphoribosyltransferase of Lactococcus lactis subsp. cremoris (strain SK11).